Here is a 113-residue protein sequence, read N- to C-terminus: Small ribosomal subunit protein bS6 (113 aa).

Belongs to the bacterial ribosomal protein bS6 family.

Binds together with bS18 to 16S ribosomal RNA. This Ruthia magnifica subsp. Calyptogena magnifica protein is Small ribosomal subunit protein bS6.